The following is a 219-amino-acid chain: Capsid protein (219 aa).

The nuclear localization signals stretch occupies residues 5–29 (RRRRVVRRRKPVRRLRRRRRRFFKR).

It belongs to the circoviridae capsid protein family. In terms of assembly, homomultimer. Assembles in the nucleus, presumably in an immature form, then migrates to the cytoplasm once assembled as mature virion. Interacts with Rep; this interaction relocates Rep into the nucleus.

Its subcellular location is the host nucleus. The protein localises to the virion. Functionally, self-assembles to form the virion icosahedral capsid with a T=1 symmetry. This very small capsid (17-22 nm in diameter) allows the virus to be very stable in the environment and resistant to some disinfectants, including detergents. Essential for the initial attachment to heparan sulfate moieties and chondroitin sulfate B of the host cell surface proteoglycans. After attachment, the virus is endocytosed and traffics to the nucleus. The capsid protein binds and transports the viral genome and Rep across the nuclear envelope. The protein is Capsid protein (Cap) of Homo sapiens (Human).